Reading from the N-terminus, the 100-residue chain is A-type ATP synthase subunit F (100 aa).

The protein belongs to the V-ATPase F subunit family. Has multiple subunits with at least A(3), B(3), C, D, E, F, H, I and proteolipid K(x).

The protein resides in the cell membrane. In terms of biological role, component of the A-type ATP synthase that produces ATP from ADP in the presence of a proton gradient across the membrane. In Methanocorpusculum labreanum (strain ATCC 43576 / DSM 4855 / Z), this protein is A-type ATP synthase subunit F.